The sequence spans 731 residues: Alpha-catulin (731 aa).

Phosphoserine is present on residues serine 373 and serine 537. Residues 535 to 559 (HLSLPKPTKNSANLKSLKPDKPDSE) are disordered.

The protein belongs to the vinculin/alpha-catenin family. In terms of assembly, interacts with ARHGEF1. Interacts with Dtna. The interaction is required for correct localization of both Ctnnal1 and Dtna.

It localises to the cytoplasm. The protein localises to the cytoskeleton. The protein resides in the cell membrane. May modulate the Rho pathway signaling by providing a scaffold for the Lbc Rho guanine nucleotide exchange factor (ARHGEF1). The protein is Alpha-catulin (Ctnnal1) of Mus musculus (Mouse).